We begin with the raw amino-acid sequence, 438 residues long: Methylenetetrahydrofolate--tRNA-(uracil-5-)-methyltransferase TrmFO (438 aa).

7–12 (GAGLAG) provides a ligand contact to FAD.

It belongs to the MnmG family. TrmFO subfamily. FAD is required as a cofactor.

Its subcellular location is the cytoplasm. It catalyses the reaction uridine(54) in tRNA + (6R)-5,10-methylene-5,6,7,8-tetrahydrofolate + NADH + H(+) = 5-methyluridine(54) in tRNA + (6S)-5,6,7,8-tetrahydrofolate + NAD(+). The catalysed reaction is uridine(54) in tRNA + (6R)-5,10-methylene-5,6,7,8-tetrahydrofolate + NADPH + H(+) = 5-methyluridine(54) in tRNA + (6S)-5,6,7,8-tetrahydrofolate + NADP(+). Functionally, catalyzes the folate-dependent formation of 5-methyl-uridine at position 54 (M-5-U54) in all tRNAs. This is Methylenetetrahydrofolate--tRNA-(uracil-5-)-methyltransferase TrmFO from Sulfurihydrogenibium sp. (strain YO3AOP1).